Reading from the N-terminus, the 171-residue chain is 3-hydroxydecanoyl-[acyl-carrier-protein] dehydratase (171 aa).

Histidine 70 is an active-site residue.

Belongs to the thioester dehydratase family. FabA subfamily. In terms of assembly, homodimer.

Its subcellular location is the cytoplasm. It catalyses the reaction a (3R)-hydroxyacyl-[ACP] = a (2E)-enoyl-[ACP] + H2O. The enzyme catalyses (3R)-hydroxydecanoyl-[ACP] = (2E)-decenoyl-[ACP] + H2O. It carries out the reaction (2E)-decenoyl-[ACP] = (3Z)-decenoyl-[ACP]. It functions in the pathway lipid metabolism; fatty acid biosynthesis. In terms of biological role, necessary for the introduction of cis unsaturation into fatty acids. Catalyzes the dehydration of (3R)-3-hydroxydecanoyl-ACP to E-(2)-decenoyl-ACP and then its isomerization to Z-(3)-decenoyl-ACP. Can catalyze the dehydratase reaction for beta-hydroxyacyl-ACPs with saturated chain lengths up to 16:0, being most active on intermediate chain length. In Shewanella putrefaciens (strain CN-32 / ATCC BAA-453), this protein is 3-hydroxydecanoyl-[acyl-carrier-protein] dehydratase.